Here is a 362-residue protein sequence, read N- to C-terminus: Ribosome-binding ATPase YchF (362 aa).

The OBG-type G domain occupies 3-255 (FKCGIIGLPN…MSDEEKKSFM (253 aa)). Position 12-17 (12-17 (NVGKST)) interacts with ATP. Mg(2+) is bound by residues Ser-16 and Thr-36. A TGS domain is found at 277 to 360 (NLITFFTVGD…QDGDIIHFLF (84 aa)).

Belongs to the TRAFAC class OBG-HflX-like GTPase superfamily. OBG GTPase family. YchF/OLA1 subfamily. Mg(2+) is required as a cofactor.

Its function is as follows. ATPase that binds to both the 70S ribosome and the 50S ribosomal subunit in a nucleotide-independent manner. The polypeptide is Ribosome-binding ATPase YchF (Buchnera aphidicola subsp. Acyrthosiphon pisum (strain APS) (Acyrthosiphon pisum symbiotic bacterium)).